A 236-amino-acid polypeptide reads, in one-letter code: 2,3,4,5-tetrahydropyridine-2,6-dicarboxylate N-acetyltransferase (236 aa).

The protein belongs to the transferase hexapeptide repeat family. DapH subfamily.

It catalyses the reaction (S)-2,3,4,5-tetrahydrodipicolinate + acetyl-CoA + H2O = L-2-acetamido-6-oxoheptanedioate + CoA. It functions in the pathway amino-acid biosynthesis; L-lysine biosynthesis via DAP pathway; LL-2,6-diaminopimelate from (S)-tetrahydrodipicolinate (acetylase route): step 1/3. In terms of biological role, catalyzes the transfer of an acetyl group from acetyl-CoA to tetrahydrodipicolinate. In Limosilactobacillus reuteri (strain DSM 20016) (Lactobacillus reuteri), this protein is 2,3,4,5-tetrahydropyridine-2,6-dicarboxylate N-acetyltransferase.